A 476-amino-acid chain; its full sequence is TOM1-like protein 1 (476 aa).

A VHS domain is found at 22–154 (ATFAGVQTED…DLVKKGVQFP (133 aa)). Residues 155–179 (PSEAEAETARQETAQISSNPPTSVP) form a disordered region. Polar residues predominate over residues 170 to 179 (ISSNPPTSVP). S171 bears the Phosphoserine mark. In terms of domain architecture, GAT spans 200 to 288 (EQIGKLHSEL…AILGYERFTR (89 aa)). Over residues 298–314 (KNQKEATNTTSEPSAPS) the composition is skewed to polar residues. Residues 298–327 (KNQKEATNTTSEPSAPSQDLLDLSPSPRMP) are disordered. Phosphoserine is present on residues S314, S321, and S323. Residues 392 to 395 (YDNF) are interaction with GRB2. An SH3-binding motif is present at residues 421–425 (LPPLP). Residues 442–445 (YEVM) are interaction with PIK3R1. Y460 carries the post-translational modification Phosphotyrosine. An SH2-binding motif is present at residues 460 to 463 (YEEI).

The protein belongs to the TOM1 family. As to quaternary structure, interacts with FYN, GRB2 and PIK3R1 when phosphorylated. Interacts with LYN. Post-translationally, phosphorylated on tyrosines by FYN and LYN.

It localises to the golgi apparatus. It is found in the golgi stack. Its subcellular location is the endosome membrane. The protein resides in the cytoplasm. The protein localises to the membrane. Probable adapter protein involved in signaling pathways. Interacts with the SH2 and SH3 domains of various signaling proteins when it is phosphorylated. May promote FYN activation, possibly by disrupting intramolecular SH3-dependent interactions. The chain is TOM1-like protein 1 (TOM1L1) from Homo sapiens (Human).